The chain runs to 343 residues: MAEQLTITAPDDWHVHLRDEEMLERVVAYTARCFRRAIVMPNLRPPVTTVDAARSYRDRILSACPEGVAFTPLMTAYLTDNSDPDDLERGFQEGVYTAAKLYPANATTNSAAGVTDLDQIGRVLSRMEAIGMPLLIHGEVTDADVDVFDREAVFIERHLKSLRTRHPELKVVFEHITTEQAVDYVGSSDRNLAATITPHHLQINRNSMFLGGLRSDFYCLPVVKRERHRLALRRAATSGDPRFFLGTDSAPHPRAGKETSCGCAGIFNAPFALESYAQVFAEEEAMHHLEGFASLHGPAFYGLPANNDTVTLEKVAVDVPELVNGLVPFHAGETLPWRLQPCM.

Positions 14 and 16 each coordinate Zn(2+). Substrate is bound by residues 16-18 and N42; that span reads HLR. Residues K100, H137, and H175 each contribute to the Zn(2+) site. The residue at position 100 (K100) is an N6-carboxylysine. H137 lines the substrate pocket. L220 contacts substrate. D248 contributes to the Zn(2+) binding site. D248 is an active-site residue. Residues H252 and A264 each coordinate substrate.

Belongs to the metallo-dependent hydrolases superfamily. DHOase family. Class II DHOase subfamily. As to quaternary structure, homodimer. Zn(2+) serves as cofactor.

The catalysed reaction is (S)-dihydroorotate + H2O = N-carbamoyl-L-aspartate + H(+). The protein operates within pyrimidine metabolism; UMP biosynthesis via de novo pathway; (S)-dihydroorotate from bicarbonate: step 3/3. Catalyzes the reversible cyclization of carbamoyl aspartate to dihydroorotate. This chain is Dihydroorotase, found in Parasynechococcus marenigrum (strain WH8102).